The chain runs to 529 residues: Peptide chain release factor 3 (529 aa).

In terms of domain architecture, tr-type G spans 11 to 280 (AKRRTFAIIS…GLVEWAPAPM (270 aa)). GTP is bound by residues 20 to 27 (SHPDAGKT), 88 to 92 (DTPGH), and 142 to 145 (NKLD).

It belongs to the TRAFAC class translation factor GTPase superfamily. Classic translation factor GTPase family. PrfC subfamily.

The protein localises to the cytoplasm. Its function is as follows. Increases the formation of ribosomal termination complexes and stimulates activities of RF-1 and RF-2. It binds guanine nucleotides and has strong preference for UGA stop codons. It may interact directly with the ribosome. The stimulation of RF-1 and RF-2 is significantly reduced by GTP and GDP, but not by GMP. This is Peptide chain release factor 3 from Shigella dysenteriae serotype 1 (strain Sd197).